Consider the following 183-residue polypeptide: Adenylate kinase (183 aa).

Residue 7–15 (GVAGVGKTT) participates in ATP binding.

It belongs to the archaeal adenylate kinase family.

The protein resides in the cytoplasm. The catalysed reaction is AMP + ATP = 2 ADP. The polypeptide is Adenylate kinase (adkA) (Thermoplasma acidophilum (strain ATCC 25905 / DSM 1728 / JCM 9062 / NBRC 15155 / AMRC-C165)).